The chain runs to 412 residues: MAAAAGEEEEEEEAARESAARPAAGPALWRLPEELLLLICSYLDMRALGRLAQVCRWLRRFTSCDLLWRRIARASLNSGFTRLGTDLMTSVPVKERVKVSQNWRLGRCREGILLKWRCSQMPWMQLEDDSLYISQANFILAYQFRPDGASLNRRPLGVFAGHDEDVCHFVLANSHIVSAGGDGKIGIHKIHSTFTVKYSAHEQEVNCVDCKGGIIVSGSRDRTAKVWPLASGRLGQCLHTIQTEDRVWSIAISPLLSSFVTGTACCGHFSPLRIWDLNSGQLMTHLGSDFPPGAGVLDVMYESPFTLLSCGYDTYVRYWDLRTSVRKCVMEWEEPHDSTLYCLQTDGNHLLATGSSYYGVVRLWDRRQRACLHAFPLTSTPLSSPVYCLRLTTKHLYAALSYNLHVLDFQNP.

The region spanning 25–71 is the F-box domain; that stretch reads GPALWRLPEELLLLICSYLDMRALGRLAQVCRWLRRFTSCDLLWRRI. WD repeat units follow at residues 154 to 190, 193 to 229, 236 to 277, 283 to 321, 327 to 366, and 373 to 409; these read RPLG…IHKI, TFTV…VWPL, QCLH…IWDL, MTHL…YWDL, KCVM…LWDR, and HAFP…VLDF.

In terms of assembly, part of a SCF (SKP1-cullin-F-box) protein ligase complex. Interacts with POUF51. In terms of tissue distribution, expressed in brain, kidney, lung and liver.

In terms of biological role, probably recognizes and binds to some phosphorylated proteins and promotes their ubiquitination and degradation. Likely to be involved in key signaling pathways crucial for normal limb development. May participate in Wnt signaling. The protein is F-box/WD repeat-containing protein 4 (FBXW4) of Homo sapiens (Human).